A 180-amino-acid polypeptide reads, in one-letter code: MATNLKDIADQYAKAIFELSSEQGNVEDTRKDLDTLKVVFENNPNFVTIVSSNDINSEARDGLLTTLTTGASEAIQNLVKLLAYNNRLNLLTQIVTSFEDYYNDAHGIVNVVATTAVALDETRLDKLAAVFASKTGAKHVNLTNNVDESIIGGVILQSQSTLIDGSLQTKIAKMKAQLLG.

This sequence belongs to the ATPase delta chain family. In terms of assembly, F-type ATPases have 2 components, F(1) - the catalytic core - and F(0) - the membrane proton channel. F(1) has five subunits: alpha(3), beta(3), gamma(1), delta(1), epsilon(1). F(0) has three main subunits: a(1), b(2) and c(10-14). The alpha and beta chains form an alternating ring which encloses part of the gamma chain. F(1) is attached to F(0) by a central stalk formed by the gamma and epsilon chains, while a peripheral stalk is formed by the delta and b chains.

It localises to the cell membrane. In terms of biological role, f(1)F(0) ATP synthase produces ATP from ADP in the presence of a proton or sodium gradient. F-type ATPases consist of two structural domains, F(1) containing the extramembraneous catalytic core and F(0) containing the membrane proton channel, linked together by a central stalk and a peripheral stalk. During catalysis, ATP synthesis in the catalytic domain of F(1) is coupled via a rotary mechanism of the central stalk subunits to proton translocation. Functionally, this protein is part of the stalk that links CF(0) to CF(1). It either transmits conformational changes from CF(0) to CF(1) or is implicated in proton conduction. This Leuconostoc citreum (strain KM20) protein is ATP synthase subunit delta.